A 134-amino-acid polypeptide reads, in one-letter code: Cytochrome b5 (134 aa).

The Cytochrome b5 heme-binding domain occupies 6–82; that stretch reads VKYFTRAEVA…MKQYKVGELV (77 aa). Positions 41 and 65 each coordinate heme. The chain crosses the membrane as a helical span at residues 111–131; that stretch reads WLMPFVLGLVATLIYKFFFGT.

Belongs to the cytochrome b5 family.

The protein resides in the endoplasmic reticulum membrane. The protein localises to the microsome membrane. Functionally, cytochrome b5 is a membrane bound hemoprotein which function as an electron carrier for several membrane bound oxygenases. The polypeptide is Cytochrome b5 (Cyt-b5) (Musca domestica (House fly)).